The primary structure comprises 572 residues: Probable D-xylulose kinase A (572 aa).

Substrate contacts are provided by His-95, Arg-166, Asp-282, and Asn-283. Residues Trp-365, 470 to 471 (GG), and Asn-474 each bind ATP.

Belongs to the FGGY kinase family.

The protein localises to the cytoplasm. It catalyses the reaction D-xylulose + ATP = D-xylulose 5-phosphate + ADP + H(+). Its function is as follows. Highly specific D-xylulose kinase which participates in the catabolism of xylose. Xylose is a major component of hemicelluloses such as xylan. Most fungi utilize D-xylose via three enzymatic reactions, xylose reductase (XR), xylitol dehydrogenase (XDH), and xylulokinase, to form xylulose 5-phosphate, which enters pentose phosphate pathway. This is Probable D-xylulose kinase A (xkiA) from Aspergillus flavus (strain ATCC 200026 / FGSC A1120 / IAM 13836 / NRRL 3357 / JCM 12722 / SRRC 167).